The chain runs to 69 residues: Ferredoxin-1 (69 aa).

Positions 12, 18, and 57 each coordinate [3Fe-4S] cluster.

[3Fe-4S] cluster is required as a cofactor.

In terms of biological role, electron transport protein for the cytochrome P-450-SU1 system. The sequence is that of Ferredoxin-1 (suaB) from Streptomyces griseolus.